Here is a 44-residue protein sequence, read N- to C-terminus: Photosystem I reaction center subunit IX (44 aa).

Residues 7–27 traverse the membrane as a helical segment; that stretch reads YLSVAPVLTTLWFGSLAGLLI.

The protein belongs to the PsaJ family.

The protein resides in the plastid. It localises to the chloroplast thylakoid membrane. May help in the organization of the PsaE and PsaF subunits. This is Photosystem I reaction center subunit IX from Drimys granadensis.